The sequence spans 371 residues: uncharacterized protein (371 aa).

A disordered region spans residues 339–371 (KVTHEDLVKNRPRSPVRPPIPATAKTPDLPERH).

This is an uncharacterized protein from Escherichia coli (strain K12).